The chain runs to 378 residues: Ribosomal RNA large subunit methyltransferase G (378 aa).

It belongs to the methyltransferase superfamily. RlmG family.

It localises to the cytoplasm. It catalyses the reaction guanosine(1835) in 23S rRNA + S-adenosyl-L-methionine = N(2)-methylguanosine(1835) in 23S rRNA + S-adenosyl-L-homocysteine + H(+). Functionally, specifically methylates the guanine in position 1835 (m2G1835) of 23S rRNA. The polypeptide is Ribosomal RNA large subunit methyltransferase G (Escherichia coli (strain ATCC 8739 / DSM 1576 / NBRC 3972 / NCIMB 8545 / WDCM 00012 / Crooks)).